Here is a 591-residue protein sequence, read N- to C-terminus: V-type ATP synthase alpha chain (591 aa).

ATP is bound at residue 233–240 (GPFGAGKT).

The protein belongs to the ATPase alpha/beta chains family.

The enzyme catalyses ATP + H2O + 4 H(+)(in) = ADP + phosphate + 5 H(+)(out). In terms of biological role, produces ATP from ADP in the presence of a proton gradient across the membrane. The V-type alpha chain is a catalytic subunit. This Streptococcus pyogenes serotype M3 (strain ATCC BAA-595 / MGAS315) protein is V-type ATP synthase alpha chain.